The primary structure comprises 555 residues: Formate--tetrahydrofolate ligase (555 aa).

An ATP-binding site is contributed by Thr-65–Ser-72.

Belongs to the formate--tetrahydrofolate ligase family.

It carries out the reaction (6S)-5,6,7,8-tetrahydrofolate + formate + ATP = (6R)-10-formyltetrahydrofolate + ADP + phosphate. It functions in the pathway one-carbon metabolism; tetrahydrofolate interconversion. The sequence is that of Formate--tetrahydrofolate ligase from Staphylococcus epidermidis (strain ATCC 35984 / DSM 28319 / BCRC 17069 / CCUG 31568 / BM 3577 / RP62A).